The primary structure comprises 491 residues: Ketol-acid reductoisomerase (NADP(+)) (491 aa).

Residues 15 to 208 (AQLGKCRFMG…GGHRAGVLES (194 aa)) enclose the KARI N-terminal Rossmann domain. Residues 45 to 48 (CGAQ), R68, R76, S78, and 108 to 110 (DKQ) each bind NADP(+). H132 is an active-site residue. G158 is an NADP(+) binding site. 2 consecutive KARI C-terminal knotted domains span residues 209-344 (SFVA…TAPQ) and 345-484 (YEGK…MTDM). Mg(2+) contacts are provided by D217, E221, E389, and E393. Substrate is bound at residue S414.

It belongs to the ketol-acid reductoisomerase family. Requires Mg(2+) as cofactor.

It catalyses the reaction (2R)-2,3-dihydroxy-3-methylbutanoate + NADP(+) = (2S)-2-acetolactate + NADPH + H(+). The catalysed reaction is (2R,3R)-2,3-dihydroxy-3-methylpentanoate + NADP(+) = (S)-2-ethyl-2-hydroxy-3-oxobutanoate + NADPH + H(+). Its pathway is amino-acid biosynthesis; L-isoleucine biosynthesis; L-isoleucine from 2-oxobutanoate: step 2/4. The protein operates within amino-acid biosynthesis; L-valine biosynthesis; L-valine from pyruvate: step 2/4. Its function is as follows. Involved in the biosynthesis of branched-chain amino acids (BCAA). Catalyzes an alkyl-migration followed by a ketol-acid reduction of (S)-2-acetolactate (S2AL) to yield (R)-2,3-dihydroxy-isovalerate. In the isomerase reaction, S2AL is rearranged via a Mg-dependent methyl migration to produce 3-hydroxy-3-methyl-2-ketobutyrate (HMKB). In the reductase reaction, this 2-ketoacid undergoes a metal-dependent reduction by NADPH to yield (R)-2,3-dihydroxy-isovalerate. This Escherichia coli O6:K15:H31 (strain 536 / UPEC) protein is Ketol-acid reductoisomerase (NADP(+)).